The sequence spans 267 residues: Glutamate racemase (267 aa).

Substrate-binding positions include 10–11 (DS) and 42–43 (YG). The active-site Proton donor/acceptor is Cys73. 74–75 (NT) provides a ligand contact to substrate. The Proton donor/acceptor role is filled by Cys183. Residue 184–185 (TH) coordinates substrate.

It belongs to the aspartate/glutamate racemases family.

The enzyme catalyses L-glutamate = D-glutamate. Its pathway is cell wall biogenesis; peptidoglycan biosynthesis. Provides the (R)-glutamate required for cell wall biosynthesis. The sequence is that of Glutamate racemase from Limosilactobacillus reuteri (strain DSM 20016) (Lactobacillus reuteri).